We begin with the raw amino-acid sequence, 448 residues long: tRNA modification GTPase MnmE (448 aa).

Residues Arg24, Glu81, and Lys120 each contribute to the (6S)-5-formyl-5,6,7,8-tetrahydrofolate site. Positions 216–373 (GLNVVLVGAP…LKRTLLCEAG (158 aa)) constitute a TrmE-type G domain. Residue Asn226 coordinates K(+). GTP contacts are provided by residues 226–231 (NVGKSS), 245–251 (TDIAGTT), and 270–273 (DTAG). Ser230 is a Mg(2+) binding site. The K(+) site is built by Thr245, Ile247, and Thr250. Thr251 is a Mg(2+) binding site. Lys448 contacts (6S)-5-formyl-5,6,7,8-tetrahydrofolate.

Belongs to the TRAFAC class TrmE-Era-EngA-EngB-Septin-like GTPase superfamily. TrmE GTPase family. As to quaternary structure, homodimer. Heterotetramer of two MnmE and two MnmG subunits. K(+) serves as cofactor.

It localises to the cytoplasm. In terms of biological role, exhibits a very high intrinsic GTPase hydrolysis rate. Involved in the addition of a carboxymethylaminomethyl (cmnm) group at the wobble position (U34) of certain tRNAs, forming tRNA-cmnm(5)s(2)U34. This Neisseria gonorrhoeae (strain ATCC 700825 / FA 1090) protein is tRNA modification GTPase MnmE.